Reading from the N-terminus, the 118-residue chain is Small ribosomal subunit protein uS13 (118 aa).

This sequence belongs to the universal ribosomal protein uS13 family. In terms of assembly, part of the 30S ribosomal subunit. Forms a loose heterodimer with protein S19. Forms two bridges to the 50S subunit in the 70S ribosome.

In terms of biological role, located at the top of the head of the 30S subunit, it contacts several helices of the 16S rRNA. In the 70S ribosome it contacts the 23S rRNA (bridge B1a) and protein L5 of the 50S subunit (bridge B1b), connecting the 2 subunits; these bridges are implicated in subunit movement. Contacts the tRNAs in the A and P-sites. The protein is Small ribosomal subunit protein uS13 of Carsonella ruddii (strain PV).